A 220-amino-acid chain; its full sequence is Probable nicotinate-nucleotide adenylyltransferase (220 aa).

The protein belongs to the NadD family.

The catalysed reaction is nicotinate beta-D-ribonucleotide + ATP + H(+) = deamido-NAD(+) + diphosphate. The protein operates within cofactor biosynthesis; NAD(+) biosynthesis; deamido-NAD(+) from nicotinate D-ribonucleotide: step 1/1. Functionally, catalyzes the reversible adenylation of nicotinate mononucleotide (NaMN) to nicotinic acid adenine dinucleotide (NaAD). In Yersinia enterocolitica serotype O:8 / biotype 1B (strain NCTC 13174 / 8081), this protein is Probable nicotinate-nucleotide adenylyltransferase.